Consider the following 340-residue polypeptide: Dihydroorotate dehydrogenase (quinone) (340 aa).

FMN is bound by residues 65–69 (AGLDK) and Thr-89. Lys-69 is a substrate binding site. Substrate is bound at residue 114–118 (NRMGF). Residues Asn-142 and Asn-175 each coordinate FMN. Position 175 (Asn-175) interacts with substrate. Catalysis depends on Ser-178, which acts as the Nucleophile. Asn-180 contributes to the substrate binding site. Positions 220 and 248 each coordinate FMN. Residue 249-250 (NT) participates in substrate binding. Residues Gly-271, Gly-300, and 321–322 (YT) contribute to the FMN site.

The protein belongs to the dihydroorotate dehydrogenase family. Type 2 subfamily. In terms of assembly, monomer. FMN is required as a cofactor.

Its subcellular location is the cell membrane. The catalysed reaction is (S)-dihydroorotate + a quinone = orotate + a quinol. The protein operates within pyrimidine metabolism; UMP biosynthesis via de novo pathway; orotate from (S)-dihydroorotate (quinone route): step 1/1. In terms of biological role, catalyzes the conversion of dihydroorotate to orotate with quinone as electron acceptor. In Paraburkholderia xenovorans (strain LB400), this protein is Dihydroorotate dehydrogenase (quinone).